Here is a 449-residue protein sequence, read N- to C-terminus: Argininosuccinate synthase (449 aa).

ATP is bound by residues 17–25 (AFSGGLDTS) and Ala-43. Tyr-99 contributes to the L-citrulline binding site. Residues Gly-129 and Thr-131 each contribute to the ATP site. 3 residues coordinate L-aspartate: Thr-131, Asn-135, and Asp-136. Asn-135 contacts L-citrulline. An ATP-binding site is contributed by Asp-136. Residues Arg-139 and Ser-192 each coordinate L-citrulline. Position 194 (Asp-194) interacts with ATP. Residues Thr-201, Glu-203, and Glu-280 each coordinate L-citrulline.

It belongs to the argininosuccinate synthase family. Type 2 subfamily. Homotetramer.

The protein localises to the cytoplasm. It carries out the reaction L-citrulline + L-aspartate + ATP = 2-(N(omega)-L-arginino)succinate + AMP + diphosphate + H(+). It participates in amino-acid biosynthesis; L-arginine biosynthesis; L-arginine from L-ornithine and carbamoyl phosphate: step 2/3. The polypeptide is Argininosuccinate synthase (Dickeya dadantii (strain 3937) (Erwinia chrysanthemi (strain 3937))).